Here is a 228-residue protein sequence, read N- to C-terminus: Growth arrest-specific protein 1 homolog (228 aa).

Residues methionine 1–alanine 17 form the signal peptide. N-linked (GlcNAc...) asparagine glycans are attached at residues asparagine 143 and asparagine 156. Aspartate 205 carries GPI-anchor amidated aspartate lipidation. A propeptide spans serine 206–phenylalanine 228 (removed in mature form).

As to expression, pharynx muscle cells from its early formation, in the two-fold embryo, until the adult stage.

Its subcellular location is the cell membrane. Role in pharynx function or development. This is Growth arrest-specific protein 1 homolog (phg-1) from Caenorhabditis elegans.